Here is a 230-residue protein sequence, read N- to C-terminus: Large ribosomal subunit protein uL1 (230 aa).

Belongs to the universal ribosomal protein uL1 family. As to quaternary structure, part of the 50S ribosomal subunit.

In terms of biological role, binds directly to 23S rRNA. The L1 stalk is quite mobile in the ribosome, and is involved in E site tRNA release. Functionally, protein L1 is also a translational repressor protein, it controls the translation of the L11 operon by binding to its mRNA. The chain is Large ribosomal subunit protein uL1 from Staphylococcus aureus (strain Mu3 / ATCC 700698).